The chain runs to 525 residues: GMP synthase [glutamine-hydrolyzing] (525 aa).

The Glutamine amidotransferase type-1 domain maps to 9–207; sequence RVLILDFGSQ…VLEIAGCEPL (199 aa). Cys86 serves as the catalytic Nucleophile. Active-site residues include His181 and Glu183. In terms of domain architecture, GMPS ATP-PPase spans 208–400; that stretch reads WTPANIVEDA…LGLPYDMVYR (193 aa). Position 235 to 241 (235 to 241) interacts with ATP; that stretch reads SGGVDSS.

Homodimer.

The catalysed reaction is XMP + L-glutamine + ATP + H2O = GMP + L-glutamate + AMP + diphosphate + 2 H(+). It participates in purine metabolism; GMP biosynthesis; GMP from XMP (L-Gln route): step 1/1. In terms of biological role, catalyzes the synthesis of GMP from XMP. This is GMP synthase [glutamine-hydrolyzing] from Teredinibacter turnerae (strain ATCC 39867 / T7901).